A 987-amino-acid chain; its full sequence is Probable outer membrane protein PmpG (987 aa).

Residues 1-25 (MMQTPFHKFFLLAMLSYSLLQGGHA) form the signal peptide. An Autotransporter domain is found at 707–987 (GRAYCRGIWI…GLSIGSKIRF (281 aa)).

Belongs to the PMP outer membrane protein family.

It is found in the secreted. The protein resides in the cell wall. The protein localises to the cell outer membrane. This Chlamydia muridarum (strain MoPn / Nigg) protein is Probable outer membrane protein PmpG (pmpG).